The chain runs to 185 residues: Intraflagellar transport protein 22 homolog (185 aa).

GTP is bound by residues 10-17 (GPCESGKT), 63-67 (DCGGD), and 123-126 (HKPG). Residue S137 is modified to Phosphoserine.

The protein belongs to the small GTPase superfamily. Rab family. Component of the IFT complex B, at least composed of IFT20, IFT22, IFT25, IFT27, IFT46, IFT52, TRAF3IP1/IFT54, IFT57, IFT74, IFT80, IFT81, and IFT88. Interacts with IFT88. Interacts with CFAP61.

The protein localises to the cell projection. The protein resides in the cilium. Its function is as follows. Small GTPase-like component of the intraflagellar transport (IFT) complex B. The sequence is that of Intraflagellar transport protein 22 homolog (IFT22) from Homo sapiens (Human).